A 116-amino-acid chain; its full sequence is Large ribosomal subunit protein bL19 (116 aa).

It belongs to the bacterial ribosomal protein bL19 family.

Functionally, this protein is located at the 30S-50S ribosomal subunit interface and may play a role in the structure and function of the aminoacyl-tRNA binding site. This is Large ribosomal subunit protein bL19 from Staphylococcus aureus (strain Mu3 / ATCC 700698).